Reading from the N-terminus, the 167-residue chain is 3-isopropylmalate dehydratase small subunit (167 aa).

The protein belongs to the LeuD family. LeuD type 2 subfamily. As to quaternary structure, heterodimer of LeuC and LeuD.

The enzyme catalyses (2R,3S)-3-isopropylmalate = (2S)-2-isopropylmalate. The protein operates within amino-acid biosynthesis; L-leucine biosynthesis; L-leucine from 3-methyl-2-oxobutanoate: step 2/4. Functionally, catalyzes the isomerization between 2-isopropylmalate and 3-isopropylmalate, via the formation of 2-isopropylmaleate. The protein is 3-isopropylmalate dehydratase small subunit of Wolinella succinogenes (strain ATCC 29543 / DSM 1740 / CCUG 13145 / JCM 31913 / LMG 7466 / NCTC 11488 / FDC 602W) (Vibrio succinogenes).